Reading from the N-terminus, the 484-residue chain is Aldehyde dehydrogenase family 3 member F1 (484 aa).

192-197 (GSPKIG) provides a ligand contact to NAD(+). Glutamate 214 serves as the catalytic Proton acceptor. Cysteine 252 (nucleophile) is an active-site residue.

Belongs to the aldehyde dehydrogenase family. In terms of assembly, homotetramer. As to expression, constituively expressed at low levels.

The catalysed reaction is an aldehyde + NAD(+) + H2O = a carboxylate + NADH + 2 H(+). In Arabidopsis thaliana (Mouse-ear cress), this protein is Aldehyde dehydrogenase family 3 member F1 (ALDH3F1).